The sequence spans 779 residues: Phosphoribosylformylglycinamidine synthase subunit PurL (779 aa).

Residue His52 is part of the active site. Positions 55 and 94 each coordinate ATP. Residue Glu96 coordinates Mg(2+). Substrate contacts are provided by residues 97-100 and Arg119; that span reads SHNH. His98 serves as the catalytic Proton acceptor. Asp120 is a Mg(2+) binding site. Substrate is bound at residue Gln243. Asp271 contributes to the Mg(2+) binding site. 315 to 317 contributes to the substrate binding site; that stretch reads ESQ. Asn523 and Gly560 together coordinate ATP. Asn561 provides a ligand contact to Mg(2+). Substrate is bound at residue Ser563.

It belongs to the FGAMS family. In terms of assembly, monomer. Part of the FGAM synthase complex composed of 1 PurL, 1 PurQ and 2 PurS subunits.

It is found in the cytoplasm. It carries out the reaction N(2)-formyl-N(1)-(5-phospho-beta-D-ribosyl)glycinamide + L-glutamine + ATP + H2O = 2-formamido-N(1)-(5-O-phospho-beta-D-ribosyl)acetamidine + L-glutamate + ADP + phosphate + H(+). It functions in the pathway purine metabolism; IMP biosynthesis via de novo pathway; 5-amino-1-(5-phospho-D-ribosyl)imidazole from N(2)-formyl-N(1)-(5-phospho-D-ribosyl)glycinamide: step 1/2. Its function is as follows. Part of the phosphoribosylformylglycinamidine synthase complex involved in the purines biosynthetic pathway. Catalyzes the ATP-dependent conversion of formylglycinamide ribonucleotide (FGAR) and glutamine to yield formylglycinamidine ribonucleotide (FGAM) and glutamate. The FGAM synthase complex is composed of three subunits. PurQ produces an ammonia molecule by converting glutamine to glutamate. PurL transfers the ammonia molecule to FGAR to form FGAM in an ATP-dependent manner. PurS interacts with PurQ and PurL and is thought to assist in the transfer of the ammonia molecule from PurQ to PurL. This Prochlorococcus marinus (strain AS9601) protein is Phosphoribosylformylglycinamidine synthase subunit PurL.